The sequence spans 564 residues: NAD-dependent malic enzyme (564 aa).

Tyrosine 102 acts as the Proton donor in catalysis. Arginine 155 is a binding site for NAD(+). Lysine 173 functions as the Proton acceptor in the catalytic mechanism. The a divalent metal cation site is built by glutamate 244, aspartate 245, and aspartate 268. NAD(+)-binding residues include aspartate 268 and asparagine 417.

The protein belongs to the malic enzymes family. As to quaternary structure, homotetramer. It depends on Mg(2+) as a cofactor. Mn(2+) is required as a cofactor.

The catalysed reaction is (S)-malate + NAD(+) = pyruvate + CO2 + NADH. It carries out the reaction oxaloacetate + H(+) = pyruvate + CO2. The protein is NAD-dependent malic enzyme of Pseudomonas aeruginosa (strain UCBPP-PA14).